A 203-amino-acid polypeptide reads, in one-letter code: Endo-type membrane-bound lytic murein transglycosylase A (203 aa).

Positions 1–15 are cleaved as a signal peptide; the sequence is MKLRWFAFLIVLLAG. Residue C16 is the site of N-palmitoyl cysteine attachment. C16 carries the S-diacylglycerol cysteine lipid modification.

It belongs to the transglycosylase Slt family.

The protein resides in the cell outer membrane. The enzyme catalyses Endolytic cleavage of the (1-&gt;4)-beta-glycosidic linkage between N-acetylmuramic acid (MurNAc) and N-acetylglucosamine (GlcNAc) residues in peptidoglycan with concomitant formation of a 1,6-anhydrobond in the MurNAc residue.. Its function is as follows. Murein-degrading enzyme. May play a role in recycling of muropeptides during cell elongation and/or cell division. Preferentially cleaves at a distance of more than two disaccharide units from the ends of the glycan chain. The polypeptide is Endo-type membrane-bound lytic murein transglycosylase A (Escherichia coli (strain K12 / MC4100 / BW2952)).